The chain runs to 369 residues: Cobalt-precorrin-5B C(1)-methyltransferase (369 aa).

Belongs to the CbiD family.

The enzyme catalyses Co-precorrin-5B + S-adenosyl-L-methionine = Co-precorrin-6A + S-adenosyl-L-homocysteine. Its pathway is cofactor biosynthesis; adenosylcobalamin biosynthesis; cob(II)yrinate a,c-diamide from sirohydrochlorin (anaerobic route): step 6/10. Functionally, catalyzes the methylation of C-1 in cobalt-precorrin-5B to form cobalt-precorrin-6A. The protein is Cobalt-precorrin-5B C(1)-methyltransferase of Prosthecochloris aestuarii (strain DSM 271 / SK 413).